We begin with the raw amino-acid sequence, 854 residues long: Alkaline phosphatase-like protein PglZ (854 aa).

It belongs to the alkaline phosphatase superfamily.

Functionally, BREX systems (bacteriophage exclusion) provide immunity against bacteriophage. A core protein of a type 1 BREX system. This system allows phage adsorption but prevents phage DNA replication, without degradation of the phage DNA. Methylation of bacterial DNA by PglX probably guides self/non-self discrimination. When the brxA-brxB-brxC-pglX and pglZ-brxL operons are transformed into a susceptible B.subtilis strain (BEST7003) they confer resistance to bacteriophages SPbeta, SP16, Zeta, phi3T and SP02 and partial protection to phages SP01 and SP82G (these include lytic and temperate phage). They do not protect against phages phi105, rho10 or rho14. Additionally confers a very slight reduction in efficiency of plasmid transformation. In Bacillus cereus (strain H3081.97), this protein is Alkaline phosphatase-like protein PglZ.